The following is a 355-amino-acid chain: UDP-N-acetylglucosamine--N-acetylmuramyl-(pentapeptide) pyrophosphoryl-undecaprenol N-acetylglucosamine transferase (355 aa).

Residues 15-17 (TGG), Asn-127, Arg-163, Ser-191, Ile-244, 263-268 (ALTVSE), and Gln-288 each bind UDP-N-acetyl-alpha-D-glucosamine.

It belongs to the glycosyltransferase 28 family. MurG subfamily.

It is found in the cell inner membrane. The enzyme catalyses di-trans,octa-cis-undecaprenyl diphospho-N-acetyl-alpha-D-muramoyl-L-alanyl-D-glutamyl-meso-2,6-diaminopimeloyl-D-alanyl-D-alanine + UDP-N-acetyl-alpha-D-glucosamine = di-trans,octa-cis-undecaprenyl diphospho-[N-acetyl-alpha-D-glucosaminyl-(1-&gt;4)]-N-acetyl-alpha-D-muramoyl-L-alanyl-D-glutamyl-meso-2,6-diaminopimeloyl-D-alanyl-D-alanine + UDP + H(+). Its pathway is cell wall biogenesis; peptidoglycan biosynthesis. Functionally, cell wall formation. Catalyzes the transfer of a GlcNAc subunit on undecaprenyl-pyrophosphoryl-MurNAc-pentapeptide (lipid intermediate I) to form undecaprenyl-pyrophosphoryl-MurNAc-(pentapeptide)GlcNAc (lipid intermediate II). In Escherichia coli O9:H4 (strain HS), this protein is UDP-N-acetylglucosamine--N-acetylmuramyl-(pentapeptide) pyrophosphoryl-undecaprenol N-acetylglucosamine transferase.